The chain runs to 381 residues: L-lactate dehydrogenase (381 aa).

The region spanning 1 to 380 is the FMN hydroxy acid dehydrogenase domain; the sequence is MIISSASDYR…KPEALVDLSK (380 aa). Y24 provides a ligand contact to substrate. FMN-binding residues include S106 and Q127. Substrate is bound at residue Y129. T155 serves as a coordination point for FMN. Substrate is bound at residue R164. Position 251 (K251) interacts with FMN. H275 acts as the Proton acceptor in catalysis. Position 278 (R278) interacts with substrate. 306-330 lines the FMN pocket; the sequence is DSGIRNGLDIVRMLALGADATMLGR.

This sequence belongs to the FMN-dependent alpha-hydroxy acid dehydrogenase family. Requires FMN as cofactor.

Its subcellular location is the cell inner membrane. It carries out the reaction (S)-lactate + A = pyruvate + AH2. Functionally, catalyzes the conversion of L-lactate to pyruvate. Is coupled to the respiratory chain. This Haemophilus influenzae (strain PittEE) protein is L-lactate dehydrogenase.